A 1133-amino-acid chain; its full sequence is Envelopment polyprotein (1133 aa).

The signal sequence occupies residues 1–17; the sequence is MWSLLLLAALVGQGFAL. Residues 18 to 484 are Lumenal-facing; that stretch reads KNVFDMRIQC…PGFHGWATAA (467 aa). Cystine bridges form between C27-C149, C61-C155, C107-C126, C131-C136, C173-C183, C208-C245, C232-C349, C374-C433, C378-C387, C403-C422, and C450-C473. N132 carries N-linked (GlcNAc...) asparagine; by host glycosylation. 2 N-linked (GlcNAc...) asparagine; by host glycosylation sites follow: N233 and N345. N-linked (GlcNAc...) asparagine; by host glycosylation occurs at N397. A helical membrane pass occupies residues 485 to 504; that stretch reads LLITFCFGWVLIPACTLAIL. The Cytoplasmic portion of the chain corresponds to 505 to 626; sequence LVLKFFANIL…NLFRYKSRCY (122 aa). The tract at residues 514–531 is binding to the ribonucleoprotein; that stretch reads LHTSNQENRFKAILRKIK. CCHC-type zinc fingers lie at residues 543–563 and 568–589; these read CEIC…NLSC and CPYC…YKVC. 3 binding to the ribonucleoprotein regions span residues 586 to 603, 590 to 601, and 609 to 623; these read YKVC…KKTV, QATHRFREDLKK, and GPGC…RYKS. The ITAM domain occupies 609 to 632; sequence GPGCYRTLNLFRYKSRCYILTMWT. Positions 613 to 616 match the YxxL motif; it reads YRTL. The helical transmembrane segment at 627–647 threads the bilayer; sequence ILTMWTLLLIIESILWAASAA. Residues 648–1104 are Lumenal-facing; the sequence is EIPLVPLWTD…WVMGIINGNW (457 aa). Cystine bridges form between C733–C768, C737–C775, C749–C883, C763–C894, C778–C902, C804–C813, C821–C830, and C861–C865. The tract at residues 755–775 is fusion loop; the sequence is YEYENSWACNPPDCPGVGTGC. N926 carries N-linked (GlcNAc...) asparagine; by host glycosylation. Intrachain disulfides connect C968/C998, C991/C1043, C1008/C1013, C1044/C1049, and C1083/C1087. A helical membrane pass occupies residues 1105–1125; it reads VVLIVLCVLLLFSLILLSILC. The interval 1120–1133 is binding to the ribonucleoprotein; the sequence is LLSILCPVRKHKKS. Residues 1126–1133 are Cytoplasmic-facing; the sequence is PVRKHKKS.

The protein belongs to the hantavirus envelope glycoprotein family. In terms of assembly, homodimer. Homotetramer; forms heterotetrameric Gn-Gc spikes in the pre-fusion conformation. Interacts (via C-terminus) with the nucleoprotein. Interacts with host TUFM; this interaction contributes to the virus-induced degradation of mitochondria by autophagy, which leads to degradation of host MAVS and inhibition of type I interferon (IFN) responses. Interacts with host MAP1LC3B; this interaction contributes to the virus-induced degradation of mitochondria by autophagy, which leads to degradation of host MAVS and inhibition of type I interferon (IFN) responses. Homodimer. Homotetramer; forms heterotetrameric Gn-Gc spikes in the pre-fusion conformation. Homotrimer; forms homotrimer in the post-fusion conformation at acidic pH. Interacts (via C-terminus) with the nucleoprotein. In terms of processing, envelope polyprotein precursor is quickly cleaved in vivo just after synthesis, presumably by host signal peptidase.

The protein resides in the virion membrane. It localises to the host cell surface. Its subcellular location is the host Golgi apparatus membrane. It is found in the host endoplasmic reticulum membrane. The protein localises to the host mitochondrion. Forms homotetramers with glycoprotein C at the surface of the virion. Attaches the virion to host cell receptors including integrin ITGAV/ITGB3. This attachment induces virion internalization predominantly through clathrin-dependent endocytosis. Mediates the assembly and budding of infectious virus particles through its interaction with the nucleocapsid protein and the viral genome. May dysregulate normal immune and endothelial cell responses through an ITAM motif. Translocates to mitochondria, binds to host TUFM and recruits MAP1LC3B. These interactions induce mitochondrial autophagy and therefore destruction of host MAVS leading to inhibition of type I interferon (IFN) responses. Concomitant breakdown of glycoprotein N is apparently prevented by the nucleoprotein that may inhibit Gn-stimulated autophagosome-lysosome fusion. Interacts with the viral genomic RNA. In terms of biological role, forms homotetramers with glycoprotein N at the surface of the virion. Attaches the virion to host cell receptors including integrin ITGAV/ITGB3. This attachment induces virion internalization predominantly through clathrin-dependent endocytosis. Class II fusion protein that promotes fusion of viral membrane with host endosomal membrane after endocytosis of the virion. In Homo sapiens (Human), this protein is Envelopment polyprotein (GP).